The primary structure comprises 302 residues: MDQKRLTHLRQLEAESIHIIREVAAEFSNPVMLYSIGKDSSVMLHLARKAFYPGTLPFPLLHVDTGWKFREMYEFRDRTAKAYGCELLVHKNPEGVAMGINPFVHGSAKHTDIMKTEGLKQALNKYGFDAAFGGARRDEEKSRAKERIYSFRDRFHRWDPKNQRPELWHNYNGQINKGESIRVFPLSNWTEQDIWQYIWLENIDIVPLYLAAERPVLERDGMLMMIDDNRINLQSGEVIKKRMVRFRTLGCWPLTGAVESNAQTLPEIIEEMLVSTTSERQGRVIDRDQAGSMELKKRQGYF.

This sequence belongs to the PAPS reductase family. CysD subfamily. As to quaternary structure, heterodimer composed of CysD, the smaller subunit, and CysN.

It carries out the reaction sulfate + ATP + H(+) = adenosine 5'-phosphosulfate + diphosphate. It functions in the pathway sulfur metabolism; hydrogen sulfide biosynthesis; sulfite from sulfate: step 1/3. Functionally, with CysN forms the ATP sulfurylase (ATPS) that catalyzes the adenylation of sulfate producing adenosine 5'-phosphosulfate (APS) and diphosphate, the first enzymatic step in sulfur assimilation pathway. APS synthesis involves the formation of a high-energy phosphoric-sulfuric acid anhydride bond driven by GTP hydrolysis by CysN coupled to ATP hydrolysis by CysD. This chain is Sulfate adenylyltransferase subunit 2, found in Escherichia coli O1:K1 / APEC.